Reading from the N-terminus, the 453-residue chain is GTPase Der (453 aa).

2 consecutive EngA-type G domains span residues 4-169 (PIVA…PPAD) and 178-353 (IGVA…EQHR). GTP-binding positions include 10–17 (GRPNVGKS), 57–61 (DTGGL), 120–123 (NKCE), 184–191 (GRPNVGKS), 231–235 (DTAGI), and 296–299 (NKWD). Positions 354–439 (RRVGTSVINE…PIRLFWRGKK (86 aa)) constitute a KH-like domain.

Belongs to the TRAFAC class TrmE-Era-EngA-EngB-Septin-like GTPase superfamily. EngA (Der) GTPase family. As to quaternary structure, associates with the 50S ribosomal subunit.

GTPase that plays an essential role in the late steps of ribosome biogenesis. This is GTPase Der from Synechococcus sp. (strain ATCC 27144 / PCC 6301 / SAUG 1402/1) (Anacystis nidulans).